The sequence spans 347 residues: UPF0284 protein M1627_0030 (347 aa).

It belongs to the UPF0284 family.

The sequence is that of UPF0284 protein M1627_0030 from Saccharolobus islandicus (strain M.16.27) (Sulfolobus islandicus).